The primary structure comprises 405 residues: Acetylornithine/succinyldiaminopimelate aminotransferase (405 aa).

Pyridoxal 5'-phosphate is bound by residues 107–108 (GA) and Phe140. Residue Arg143 coordinates N(2)-acetyl-L-ornithine. 225-228 (DEVQ) contacts pyridoxal 5'-phosphate. Lys254 carries the post-translational modification N6-(pyridoxal phosphate)lysine. Residue Thr282 participates in N(2)-acetyl-L-ornithine binding. A pyridoxal 5'-phosphate-binding site is contributed by Thr283.

It belongs to the class-III pyridoxal-phosphate-dependent aminotransferase family. ArgD subfamily. Homodimer. It depends on pyridoxal 5'-phosphate as a cofactor.

It localises to the cytoplasm. It carries out the reaction N(2)-acetyl-L-ornithine + 2-oxoglutarate = N-acetyl-L-glutamate 5-semialdehyde + L-glutamate. The catalysed reaction is N-succinyl-(2S,6S)-2,6-diaminopimelate + 2-oxoglutarate = (S)-2-succinylamino-6-oxoheptanedioate + L-glutamate. Its pathway is amino-acid biosynthesis; L-arginine biosynthesis; N(2)-acetyl-L-ornithine from L-glutamate: step 4/4. It participates in amino-acid biosynthesis; L-lysine biosynthesis via DAP pathway; LL-2,6-diaminopimelate from (S)-tetrahydrodipicolinate (succinylase route): step 2/3. Its function is as follows. Involved in both the arginine and lysine biosynthetic pathways. The sequence is that of Acetylornithine/succinyldiaminopimelate aminotransferase from Yersinia pestis.